Reading from the N-terminus, the 129-residue chain is Endocuticle structural glycoprotein SgAbd-9 (129 aa).

Q1 carries the post-translational modification Pyrrolidone carboxylic acid. Residues 28–98 (DGSYTFSYES…VGNVVAPAIS (71 aa)) enclose the Chitin-binding type R&amp;R domain. Residue T120 is glycosylated (O-linked (HexNAc...) threonine).

Component of the abdominal endocuticle. This chain is Endocuticle structural glycoprotein SgAbd-9, found in Schistocerca gregaria (Desert locust).